Consider the following 480-residue polypeptide: RNA-splicing ligase RtcB homolog (480 aa).

The Mn(2+) site is built by D93, C96, H202, H234, and H328. GMP is bound at residue 201–205 (NHYTE). GMP is bound by residues 328 to 329 (HN), 377 to 380 (GGTM), S384, 403 to 406 (HGAG), and K479. The active-site GMP-histidine intermediate is the H403.

The protein belongs to the RtcB family. In terms of assembly, catalytic component of the tRNA-splicing ligase complex. It depends on Mn(2+) as a cofactor.

It catalyses the reaction a 3'-end 3'-phospho-ribonucleotide-RNA + a 5'-end dephospho-ribonucleoside-RNA + GTP = a ribonucleotidyl-ribonucleotide-RNA + GMP + diphosphate. It carries out the reaction a 3'-end 2',3'-cyclophospho-ribonucleotide-RNA + a 5'-end dephospho-ribonucleoside-RNA + GTP + H2O = a ribonucleotidyl-ribonucleotide-RNA + GMP + diphosphate + H(+). Its function is as follows. Catalytic subunit of the tRNA-splicing ligase complex that acts by directly joining spliced tRNA halves to mature-sized tRNAs by incorporating the precursor-derived splice junction phosphate into the mature tRNA as a canonical 3',5'-phosphodiester. May act as an RNA ligase with broad substrate specificity, and may function toward other RNAs. The chain is RNA-splicing ligase RtcB homolog from Thalassiosira pseudonana (Marine diatom).